Here is a 440-residue protein sequence, read N- to C-terminus: Chromosome partition protein MukF (440 aa).

The interval 208–236 (LSETSGTLRELQDTLEAAGDKLQANLLRI) is leucine-zipper.

This sequence belongs to the MukF family. In terms of assembly, interacts, and probably forms a ternary complex, with MukE and MukB via its C-terminal region. The complex formation is stimulated by calcium or magnesium. It is required for an interaction between MukE and MukB.

It localises to the cytoplasm. It is found in the nucleoid. Involved in chromosome condensation, segregation and cell cycle progression. May participate in facilitating chromosome segregation by condensation DNA from both sides of a centrally located replisome during cell division. Not required for mini-F plasmid partitioning. Probably acts via its interaction with MukB and MukE. Overexpression results in anucleate cells. It has a calcium binding activity. This is Chromosome partition protein MukF from Salmonella gallinarum (strain 287/91 / NCTC 13346).